A 237-amino-acid polypeptide reads, in one-letter code: uncharacterized protein (237 aa).

This is an uncharacterized protein from Methanocaldococcus jannaschii (strain ATCC 43067 / DSM 2661 / JAL-1 / JCM 10045 / NBRC 100440) (Methanococcus jannaschii).